The sequence spans 144 residues: Large ribosomal subunit protein uL15 (144 aa).

The interval 1–49 (MRLNTLSPAAGAKSAAKRVGRGIGSGTGKTCGRGHKGQKSRSGGGVRVG) is disordered. The segment covering 21-31 (RGIGSGTGKTC) has biased composition (gly residues).

Belongs to the universal ribosomal protein uL15 family. Part of the 50S ribosomal subunit.

Its function is as follows. Binds to the 23S rRNA. In Shewanella halifaxensis (strain HAW-EB4), this protein is Large ribosomal subunit protein uL15.